Consider the following 142-residue polypeptide: Peptidyl-prolyl cis-trans isomerase FKBP2 (142 aa).

The N-terminal stretch at 1-21 (MRLSWFRVLTVLSICLSAVAT) is a signal peptide. One can recognise a PPIase FKBP-type domain in the interval 49–137 (GDVLHMHYTG…VFEVELLKIE (89 aa)). A Prevents secretion from ER motif is present at residues 139-142 (RTEL).

Belongs to the FKBP-type PPIase family. FKBP2 subfamily. Interacts with ARFGEF1/BIG1 and the C-terminal of EPB41L2. In terms of tissue distribution, T-cells and thymus.

The protein resides in the endoplasmic reticulum membrane. It carries out the reaction [protein]-peptidylproline (omega=180) = [protein]-peptidylproline (omega=0). Inhibited by both FK506 and rapamycin. In terms of biological role, PPIases accelerate the folding of proteins. It catalyzes the cis-trans isomerization of proline imidic peptide bonds in oligopeptides. This is Peptidyl-prolyl cis-trans isomerase FKBP2 (FKBP2) from Homo sapiens (Human).